Reading from the N-terminus, the 662-residue chain is ABC transporter G family member 17 (662 aa).

Residues 22 to 276 (LAFNDLTYNV…FSEFGSPIPE (255 aa)) form the ABC transporter domain. ATP is bound at residue 69–76 (GASGAGKS). Residues 356–566 (VETVILAKRY…PYEAVLHNEF (211 aa)) form the ABC transmembrane type-2 domain. Transmembrane regions (helical) follow at residues 375–395 (LIGTRVFIVMMTGFLLATVYW), 410–430 (FFSFAMATMFYSCADGLPAFI), 451–471 (VISHSLVTLPHLFALSIGFAA), 486–508 (FIYYLMIIFASFWSGCSFVTFVS), 514–536 (VMMSYMVTFGYLSYCLLFSGFYV), and 635–655 (LWVTLAWGFFFRILFYFSLLL).

The protein belongs to the ABC transporter superfamily. ABCG family. Eye pigment precursor importer (TC 3.A.1.204) subfamily.

It is found in the membrane. The chain is ABC transporter G family member 17 (ABCG17) from Arabidopsis thaliana (Mouse-ear cress).